Here is a 720-residue protein sequence, read N- to C-terminus: Asp/Glu-specific dipeptidyl-peptidase (720 aa).

The signal sequence occupies residues 1 to 21 (MKKRLLLPLFAALCLSQIAHA). A disulfide bridge links Cys69 with Cys86. Catalysis depends on charge relay system residues His85, Asp227, and Ser655.

Belongs to the peptidase S46 family. Homodimer.

The protein localises to the cell surface. Its activity is regulated as follows. Enzyme activity is completely blocked by diisopropyl-fluorophosphates, moderately by phenylmethylsulfonyl fluoride (PMSF) and 4-(2-methyl)benzenesulfonyl fluoride, and slightly by pepstatin in vitro. In terms of biological role, catalyzes the removal of dipeptides from the N-terminus of oligopeptides. Shows a strict specificity for acidic residues (Asp or Glu) in the P1 position, and has a hydrophobic residue preference at the P2 position. Preferentially cleaves the synthetic substrate Leu-Asp-methylcoumaryl-7-amide (Leu-Asp-MCA) as compared to Leu-Glu-MCA. Is involved in amino acid metabolism and bacterial growth of asaccharolytic P.gingivalis, that utilizes amino acids from extracellular proteinaceous nutrients as energy and carbon sources. The sequence is that of Asp/Glu-specific dipeptidyl-peptidase from Porphyromonas gingivalis (strain ATCC 33277 / DSM 20709 / CIP 103683 / JCM 12257 / NCTC 11834 / 2561).